The primary structure comprises 171 residues: MTKWFNVGKIVNTHGVRGEVRVISRTDFPEERYKVGNTLYIWGEKGTEPLPVKVTSHRQHKTFDLLTFEGYSNVNEVEKFKGSLLKVPEEQLGELAEGEYYYHEVIGCKVVTENGEELGTITEILSPGANDVWVIKRPKGQDLLIPYIDDIVLQVNVEQKQVTIHVMEGLL.

In terms of domain architecture, PRC barrel spans 97-170 (EGEYYYHEVI…QVTIHVMEGL (74 aa)).

The protein belongs to the RimM family. Binds ribosomal protein uS19.

The protein resides in the cytoplasm. In terms of biological role, an accessory protein needed during the final step in the assembly of 30S ribosomal subunit, possibly for assembly of the head region. Essential for efficient processing of 16S rRNA. May be needed both before and after RbfA during the maturation of 16S rRNA. It has affinity for free ribosomal 30S subunits but not for 70S ribosomes. This chain is Ribosome maturation factor RimM, found in Bacillus cytotoxicus (strain DSM 22905 / CIP 110041 / 391-98 / NVH 391-98).